The chain runs to 946 residues: Aminopeptidase N (946 aa).

Positions 1 to 15 are cleaved as a signal peptide; the sequence is MRLLICLTLLGLVCG. Residue Asn60 is glycosylated (N-linked (GlcNAc...) asparagine). Residue 308–312 participates in substrate binding; sequence GAMEN. His344 is a Zn(2+) binding site. Glu345 serves as the catalytic Proton acceptor. Residues His348 and Glu367 each coordinate Zn(2+). 2 N-linked (GlcNAc...) asparagine glycosylation sites follow: Asn550 and Asn605. Disulfide bonds link Cys715–Cys722 and Cys751–Cys787.

Belongs to the peptidase M1 family. Zn(2+) serves as cofactor.

The protein localises to the cell membrane. It catalyses the reaction Release of an N-terminal amino acid, Xaa-|-Yaa- from a peptide, amide or arylamide. Xaa is preferably Ala, but may be most amino acids including Pro (slow action). When a terminal hydrophobic residue is followed by a prolyl residue, the two may be released as an intact Xaa-Pro dipeptide.. The sequence is that of Aminopeptidase N (APN1) from Plutella xylostella (Diamondback moth).